A 182-amino-acid chain; its full sequence is Peptidyl-tRNA hydrolase (182 aa).

Tyr14 contributes to the tRNA binding site. The active-site Proton acceptor is His19. Residues Phe64, Asn66, and Asn112 each coordinate tRNA.

This sequence belongs to the PTH family. In terms of assembly, monomer.

It localises to the cytoplasm. The catalysed reaction is an N-acyl-L-alpha-aminoacyl-tRNA + H2O = an N-acyl-L-amino acid + a tRNA + H(+). Functionally, hydrolyzes ribosome-free peptidyl-tRNAs (with 1 or more amino acids incorporated), which drop off the ribosome during protein synthesis, or as a result of ribosome stalling. Catalyzes the release of premature peptidyl moieties from peptidyl-tRNA molecules trapped in stalled 50S ribosomal subunits, and thus maintains levels of free tRNAs and 50S ribosomes. This chain is Peptidyl-tRNA hydrolase, found in Wolbachia sp. subsp. Brugia malayi (strain TRS).